Consider the following 151-residue polypeptide: Large ribosomal subunit protein uL13 (151 aa).

The disordered stretch occupies residues 129–151 (SNHPHQAQKPETLTINTIPGGNN).

This sequence belongs to the universal ribosomal protein uL13 family. Part of the 50S ribosomal subunit.

This protein is one of the early assembly proteins of the 50S ribosomal subunit, although it is not seen to bind rRNA by itself. It is important during the early stages of 50S assembly. This chain is Large ribosomal subunit protein uL13, found in Gloeothece citriformis (strain PCC 7424) (Cyanothece sp. (strain PCC 7424)).